Here is a 370-residue protein sequence, read N- to C-terminus: Protein FAM110B (370 aa).

2 disordered regions span residues Ser-127–Ala-151 and Lys-237–Leu-256. Residues Ser-238 and Ser-301 each carry the phosphoserine modification. The tract at residues Asp-317–Arg-337 is disordered. Over residues Ser-326–Asn-335 the composition is skewed to basic and acidic residues.

The protein belongs to the FAM110 family. As to expression, detected in thyroid, spleen and testis, and at lower levels in stomach, spinal cord, lymph node, trachea, adrenal gland, prostate, ovary and intestine.

Its subcellular location is the cytoplasm. The protein localises to the cytoskeleton. It localises to the microtubule organizing center. It is found in the centrosome. Functionally, may be involved in tumor progression. The polypeptide is Protein FAM110B (FAM110B) (Homo sapiens (Human)).